The sequence spans 194 residues: Imidazoleglycerol-phosphate dehydratase (194 aa).

Belongs to the imidazoleglycerol-phosphate dehydratase family.

It localises to the cytoplasm. The catalysed reaction is D-erythro-1-(imidazol-4-yl)glycerol 3-phosphate = 3-(imidazol-4-yl)-2-oxopropyl phosphate + H2O. Its pathway is amino-acid biosynthesis; L-histidine biosynthesis; L-histidine from 5-phospho-alpha-D-ribose 1-diphosphate: step 6/9. The chain is Imidazoleglycerol-phosphate dehydratase from Bacillus subtilis (strain 168).